We begin with the raw amino-acid sequence, 203 residues long: ATP-dependent Clp protease proteolytic subunit 1 (203 aa).

Ser98 functions as the Nucleophile in the catalytic mechanism. His123 is an active-site residue.

The protein belongs to the peptidase S14 family. As to quaternary structure, fourteen ClpP subunits assemble into 2 heptameric rings which stack back to back to give a disk-like structure with a central cavity, resembling the structure of eukaryotic proteasomes.

Its subcellular location is the cytoplasm. The catalysed reaction is Hydrolysis of proteins to small peptides in the presence of ATP and magnesium. alpha-casein is the usual test substrate. In the absence of ATP, only oligopeptides shorter than five residues are hydrolyzed (such as succinyl-Leu-Tyr-|-NHMec, and Leu-Tyr-Leu-|-Tyr-Trp, in which cleavage of the -Tyr-|-Leu- and -Tyr-|-Trp bonds also occurs).. Cleaves peptides in various proteins in a process that requires ATP hydrolysis. Has a chymotrypsin-like activity. Plays a major role in the degradation of misfolded proteins. The sequence is that of ATP-dependent Clp protease proteolytic subunit 1 from Chlamydia felis (strain Fe/C-56) (Chlamydophila felis).